Reading from the N-terminus, the 59-residue chain is Putative zinc finger protein ORF59a (59 aa).

A C2H2-type; degenerate zinc finger spans residues 11-33 (YQCLRCGLTFRTKKQLIRHLVNT).

The chain is Putative zinc finger protein ORF59a from Acidianus hospitalis (AFV-1).